The following is a 222-amino-acid chain: Peptide methionine sulfoxide reductase MsrA (222 aa).

Cys60 is an active-site residue.

The protein belongs to the MsrA Met sulfoxide reductase family.

The enzyme catalyses L-methionyl-[protein] + [thioredoxin]-disulfide + H2O = L-methionyl-(S)-S-oxide-[protein] + [thioredoxin]-dithiol. The catalysed reaction is [thioredoxin]-disulfide + L-methionine + H2O = L-methionine (S)-S-oxide + [thioredoxin]-dithiol. Has an important function as a repair enzyme for proteins that have been inactivated by oxidation. Catalyzes the reversible oxidation-reduction of methionine sulfoxide in proteins to methionine. The chain is Peptide methionine sulfoxide reductase MsrA from Pseudomonas entomophila (strain L48).